We begin with the raw amino-acid sequence, 212 residues long: uncharacterized protein (212 aa).

S-adenosyl-L-methionine contacts are provided by G53, E74, and D97.

This sequence belongs to the methyltransferase superfamily. YrrT family.

In terms of biological role, could be a S-adenosyl-L-methionine-dependent methyltransferase. This is an uncharacterized protein from Bacillus cytotoxicus (strain DSM 22905 / CIP 110041 / 391-98 / NVH 391-98).